The chain runs to 255 residues: Pimeloyl-[acyl-carrier protein] methyl ester esterase (255 aa).

The AB hydrolase-1 domain occupies 16–242; sequence LVLLHGWGLN…AAHAPFISHP (227 aa). Substrate is bound by residues Trp-22, 82–83, and 143–147; these read SL and FLALQ. Catalysis depends on Ser-82, which acts as the Nucleophile. Active-site residues include Asp-207 and His-235. His-235 is a substrate binding site.

The protein belongs to the AB hydrolase superfamily. Carboxylesterase BioH family. As to quaternary structure, monomer.

It localises to the cytoplasm. The catalysed reaction is 6-carboxyhexanoyl-[ACP] methyl ester + H2O = 6-carboxyhexanoyl-[ACP] + methanol + H(+). It participates in cofactor biosynthesis; biotin biosynthesis. Functionally, the physiological role of BioH is to remove the methyl group introduced by BioC when the pimeloyl moiety is complete. It allows to synthesize pimeloyl-ACP via the fatty acid synthetic pathway through the hydrolysis of the ester bonds of pimeloyl-ACP esters. The sequence is that of Pimeloyl-[acyl-carrier protein] methyl ester esterase from Pectobacterium carotovorum subsp. carotovorum (strain PC1).